Here is a 174-residue protein sequence, read N- to C-terminus: UPF0398 protein llmg_0513 (174 aa).

Belongs to the UPF0398 family.

The polypeptide is UPF0398 protein llmg_0513 (Lactococcus lactis subsp. cremoris (strain MG1363)).